A 122-amino-acid polypeptide reads, in one-letter code: Serum amyloid A-3 protein (122 aa).

Positions 1–18 (MKPFLAIIFCFLILGVDS) are cleaved as a signal peptide. Residues 100 to 122 (ANKWGRSGKDPNHFRPAGLPSKY) form a disordered region.

This sequence belongs to the SAA family. As to expression, expressed by the liver; secreted in plasma.

The protein resides in the secreted. In terms of biological role, major acute phase reactant. Apolipoprotein of the HDL complex. In vitro exhibits antimicrobial activity against Escherichia coli, Streptococcus uberis and Pseudomonas aeruginosa. The chain is Serum amyloid A-3 protein (SAA3) from Mesocricetus auratus (Golden hamster).